A 520-amino-acid chain; its full sequence is Amine oxidase [flavin-containing] B (520 aa).

Residues Met-1–Val-489 are Cytoplasmic-facing. Lys-52 bears the N6-acetyllysine mark. The residue at position 397 (Cys-397) is an S-8alpha-FAD cysteine. Residues Pro-490–Leu-516 traverse the membrane as a helical; Anchor for type IV membrane protein segment. Residues Leu-517–Ile-520 are Mitochondrial intermembrane-facing.

This sequence belongs to the flavin monoamine oxidase family. Monomer, homo- or heterodimer (containing two subunits of similar size). Each subunit contains a covalently bound flavin. Enzymatically active as monomer. The cofactor is FAD.

Its subcellular location is the mitochondrion outer membrane. It catalyses the reaction a secondary aliphatic amine + O2 + H2O = a primary amine + an aldehyde + H2O2. The enzyme catalyses (R)-adrenaline + O2 + H2O = (R)-3,4-dihydroxymandelaldehyde + methylamine + H2O2. The catalysed reaction is a primary methyl amine + O2 + H2O = an aldehyde + H2O2 + NH4(+). It carries out the reaction benzylamine + O2 + H2O = benzaldehyde + H2O2 + NH4(+). It catalyses the reaction dopamine + O2 + H2O = 3,4-dihydroxyphenylacetaldehyde + H2O2 + NH4(+). The enzyme catalyses tyramine + O2 + H2O = (4-hydroxyphenyl)acetaldehyde + H2O2 + NH4(+). The catalysed reaction is (R)-noradrenaline + O2 + H2O = (R)-3,4-dihydroxymandelaldehyde + H2O2 + NH4(+). It carries out the reaction 2-phenylethylamine + O2 + H2O = 2-phenylacetaldehyde + H2O2 + NH4(+). It catalyses the reaction N-acetylputrescine + O2 + H2O = 4-acetamidobutanal + H2O2 + NH4(+). Functionally, catalyzes the oxidative deamination of primary and some secondary amines such as neurotransmitters, and exogenous amines including the tertiary amine, neurotoxin 1-methyl-4-phenyl-1,2,3,6-tetrahydropyridine (MPTP), with concomitant reduction of oxygen to hydrogen peroxide and participates in the metabolism of neuroactive and vasoactive amines in the central nervous system and peripheral tissues. Preferentially degrades benzylamine and phenylethylamine. This Cavia porcellus (Guinea pig) protein is Amine oxidase [flavin-containing] B.